The chain runs to 749 residues: Cytosolic phospholipase A2 (749 aa).

Residues 1–178 are phospholipid binding; sequence MSFIDPYQHI…MKKLLGPKNS (178 aa). A Phosphoserine modification is found at serine 2. A C2 domain is found at 6–122; sequence PYQHIIVEHQ…KVGEKKEVPF (117 aa). 7 residues coordinate Ca(2+): aspartate 40, threonine 41, aspartate 43, asparagine 65, aspartate 93, alanine 94, and asparagine 95. A PLA2c domain is found at 140–740; sequence SCPDLRFSMA…SNVEARRFFN (601 aa). The active-site Nucleophile is serine 228. Threonine 268 carries the phosphothreonine modification. Residues 409–457 form a disordered region; sequence GSQSRGSTMEEELENITTKHIVSNDSSDSDDESHEPKGTENEDAGSDYQ. Phosphoserine occurs at positions 434, 435, and 437. A Phosphoserine; by MAPK modification is found at serine 505. Serine 515 is subject to Phosphoserine. Residue lysine 541 forms a Glycyl lysine isopeptide (Lys-Gly) (interchain with G-Cter in SUMO2) linkage. Aspartate 549 serves as the catalytic Proton acceptor. Residue lysine 606 forms a Glycyl lysine isopeptide (Lys-Gly) (interchain with G-Cter in SUMO2) linkage. Serine 727 and serine 729 each carry phosphoserine.

In terms of assembly, interacts with KAT5. Post-translationally, phosphorylated at both Ser-505 and Ser-727 in response to mitogenic stimuli.

It is found in the cytoplasm. The protein resides in the golgi apparatus membrane. The protein localises to the nucleus envelope. The enzyme catalyses a 1,2-diacyl-sn-glycero-3-phosphocholine + H2O = a 1-acyl-sn-glycero-3-phosphocholine + a fatty acid + H(+). It catalyses the reaction a 1-O-alkyl-2-acyl-sn-glycero-3-phosphocholine + H2O = a 1-O-alkyl-sn-glycero-3-phosphocholine + a fatty acid + H(+). The catalysed reaction is a 1-acyl-sn-glycero-3-phosphocholine + H2O = sn-glycerol 3-phosphocholine + a fatty acid + H(+). It carries out the reaction 1-hexadecanoyl-2-(5Z,8Z,11Z,14Z-eicosatetraenoyl)-sn-glycero-3-phosphocholine + H2O = 1-hexadecanoyl-sn-glycero-3-phosphocholine + (5Z,8Z,11Z,14Z)-eicosatetraenoate + H(+). The enzyme catalyses 1,2-di-(5Z,8Z,11Z,14Z-eicosatetraenoyl)-sn-glycero-3-phosphocholine + H2O = 1-(5Z,8Z,11Z,14Z-eicosatetraenoyl)-sn-glycero-3-phosphocholine + (5Z,8Z,11Z,14Z)-eicosatetraenoate + H(+). It catalyses the reaction 1-octadecanoyl-2-(5Z,8Z,11Z,14Z-eicosatetraenoyl)-sn-glycero-3-phosphocholine + H2O = 1-octadecanoyl-sn-glycero-3-phosphocholine + (5Z,8Z,11Z,14Z)-eicosatetraenoate + H(+). The catalysed reaction is 1-hexadecanoyl-2-(9Z,12Z-octadecadienoyl)-sn-glycero-3-phosphocholine + H2O = (9Z,12Z)-octadecadienoate + 1-hexadecanoyl-sn-glycero-3-phosphocholine + H(+). It carries out the reaction 1-octadecanoyl-2-(9Z,12Z,15Z-octadecatrienoyl)-sn-glycero-3-phosphocholine + H2O = (9Z,12Z,15Z)-octadecatrienoate + 1-octadecanoyl-sn-glycero-3-phosphocholine + H(+). The enzyme catalyses 1-(5Z,8Z,11Z,14Z-eicosatetraenoyl)-2-hexadecanoyl-sn-glycero-3-phosphocholine + H2O = 1-(5Z,8Z,11Z,14Z-eicosatetraenoyl)-sn-glycero-3-phosphocholine + hexadecanoate + H(+). It catalyses the reaction 1-O-hexadecyl-2-(5Z,8Z,11Z,14Z)-eicosatetraenoyl-sn-glycero-3-phosphocholine + H2O = 1-O-hexadecyl-sn-glycero-3-phosphocholine + (5Z,8Z,11Z,14Z)-eicosatetraenoate + H(+). The catalysed reaction is 1,2-di-(9Z-octadecenoyl)-sn-glycero-3-phospho-(1'-sn-glycerol) + H2O = 1-(9Z-octadecenoyl)-sn-glycero-3-phospho-(1'-sn-glycerol) + (9Z)-octadecenoate + H(+). It carries out the reaction 1-octadecanoyl-2-(5Z,8Z,11Z,14Z-eicosatetraenoyl)-sn-glycero-3-phosphate + H2O = 1-octadecanoyl-sn-glycero-3-phosphate + (5Z,8Z,11Z,14Z)-eicosatetraenoate + H(+). The enzyme catalyses 1-hexadecanoyl-sn-glycero-3-phosphocholine + H2O = sn-glycerol 3-phosphocholine + hexadecanoate + H(+). It catalyses the reaction 2-(prostaglandin E2)-sn-glycero-3-phosphoethanolamine + H2O = sn-glycero-3-phosphoethanolamine + prostaglandin E2 + H(+). The catalysed reaction is 2-[(15S)-hydroxy-(5Z,8Z,11Z,13E)-eicosatetraenoyl]-sn-glycero-3-phosphocholine + H2O = (15S)-hydroxy-(5Z,8Z,11Z,13E)-eicosatetraenoate + sn-glycerol 3-phosphocholine + H(+). It carries out the reaction 2-[(15R)-hydroxy-(5Z,8Z,11Z,13E)-eicosatetraenoyl]-sn-glycero-3-phosphocholine + H2O = (15R)-hydroxy-(5Z,8Z,11Z,13E)-eicosatetraenoate + sn-glycerol 3-phosphocholine + H(+). The enzyme catalyses 2-(prostaglandin E2)-sn-glycero-3-phosphocholine + H2O = prostaglandin E2 + sn-glycerol 3-phosphocholine + H(+). It catalyses the reaction 2-[(11R)-hydroxy-(5Z,8Z,12E,14Z)-eicosatetraenoyl]-sn-glycero-3-phosphocholine + H2O = (11R)-hydroxy-(5Z,8Z,12E,14Z)-eicosatetraenoate + sn-glycerol 3-phosphocholine + H(+). The catalysed reaction is 1-(5Z,8Z,11Z,14Z-eicosatetraenoyl)-2-O-hexadecyl-sn-glycero-3-phosphocholine + H2O = 2-O-hexadecyl-sn-glycero-3-phosphocholine + (5Z,8Z,11Z,14Z)-eicosatetraenoate + H(+). It carries out the reaction 1-octadecanoyl-2-(5Z,8Z,11Z,14Z-eicosatetraenoyl)-sn-glycero-3-phosphocholine + glycerol = 1-(5Z,8Z,11Z,14Z-eicosatetraenoyl)-glycerol + 1-octadecanoyl-sn-glycero-3-phosphocholine. The enzyme catalyses 1-octadecanoyl-2-(9Z,12Z,15Z-octadecatrienoyl)-sn-glycero-3-phosphocholine + glycerol = 1-(9Z,12Z,15Z-octadecatrienoyl)-glycerol + 1-octadecanoyl-sn-glycero-3-phosphocholine. The protein operates within membrane lipid metabolism; glycerophospholipid metabolism. It participates in lipid metabolism; arachidonate metabolism. It functions in the pathway lipid metabolism; prostaglandin biosynthesis. Its pathway is lipid metabolism; leukotriene B4 biosynthesis. Its activity is regulated as follows. Activated by cytosolic calcium, which is necessary for binding to membrane lipids. Activated by phosphorylation in response to mitogenic stimuli. Its function is as follows. Has primarily calcium-dependent phospholipase and lysophospholipase activities, with a major role in membrane lipid remodeling and biosynthesis of lipid mediators of the inflammatory response. Plays an important role in embryo implantation and parturition through its ability to trigger prostanoid production. Preferentially hydrolyzes the ester bond of the fatty acyl group attached at sn-2 position of phospholipids (phospholipase A2 activity). Selectively hydrolyzes sn-2 arachidonoyl group from membrane phospholipids, providing the precursor for eicosanoid biosynthesis via the cyclooxygenase pathway. In an alternative pathway of eicosanoid biosynthesis, hydrolyzes sn-2 fatty acyl chain of eicosanoid lysophopholipids to release free bioactive eicosanoids. Hydrolyzes the ester bond of the fatty acyl group attached at sn-1 position of phospholipids (phospholipase A1 activity) only if an ether linkage rather than an ester linkage is present at the sn-2 position. This hydrolysis is not stereospecific. Has calcium-independent phospholipase A2 and lysophospholipase activities in the presence of phosphoinositides. Has O-acyltransferase activity. Catalyzes the transfer of fatty acyl chains from phospholipids to a primary hydroxyl group of glycerol (sn-1 or sn-3), potentially contributing to monoacylglycerol synthesis. The chain is Cytosolic phospholipase A2 (PLA2G4A) from Pongo abelii (Sumatran orangutan).